The sequence spans 305 residues: tRNA pseudouridine synthase B (305 aa).

Catalysis depends on Asp39, which acts as the Nucleophile.

Belongs to the pseudouridine synthase TruB family. Type 1 subfamily.

The catalysed reaction is uridine(55) in tRNA = pseudouridine(55) in tRNA. Its function is as follows. Responsible for synthesis of pseudouridine from uracil-55 in the psi GC loop of transfer RNAs. This Staphylococcus aureus (strain MSSA476) protein is tRNA pseudouridine synthase B.